Consider the following 638-residue polypeptide: Phosphomethylpyrimidine synthase (638 aa).

Residues asparagine 233, methionine 262, tyrosine 291, histidine 327, 347-349 (SRG), 388-391 (DGLR), and glutamate 427 contribute to the substrate site. A Zn(2+)-binding site is contributed by histidine 431. Tyrosine 454 lines the substrate pocket. Zn(2+) is bound at residue histidine 495. [4Fe-4S] cluster is bound by residues cysteine 575, cysteine 578, and cysteine 583.

It belongs to the ThiC family. In terms of assembly, homodimer. The cofactor is [4Fe-4S] cluster.

The enzyme catalyses 5-amino-1-(5-phospho-beta-D-ribosyl)imidazole + S-adenosyl-L-methionine = 4-amino-2-methyl-5-(phosphooxymethyl)pyrimidine + CO + 5'-deoxyadenosine + formate + L-methionine + 3 H(+). The protein operates within cofactor biosynthesis; thiamine diphosphate biosynthesis. In terms of biological role, catalyzes the synthesis of the hydroxymethylpyrimidine phosphate (HMP-P) moiety of thiamine from aminoimidazole ribotide (AIR) in a radical S-adenosyl-L-methionine (SAM)-dependent reaction. The sequence is that of Phosphomethylpyrimidine synthase from Saccharophagus degradans (strain 2-40 / ATCC 43961 / DSM 17024).